The chain runs to 469 residues: MNPNQKIITIGSICMIVGIISLILQIGNIISIWVSHSIQTGNQNQPEICNQSIITYENNTWVNQTYVNISNTNFVTEQALAPVALAGNSSLCPISGWAIYSKDNGIRIGSKGDVFVIREPFISCSHLECRTFFLTQGALLNDKHSNGTVKDRSPYRTLMSCPIGESPSPYNSRFESVAWSASACHDGIGWLTIGISGPDNGAVAVLKYNGIITDTIKSWRNNILRTQESECACMNGSCFTIMTDGPSNGQASYKIFKIEKGKVVKSVELNAPNYHYEECSCYPDAGEIMCVCRDNWHGSNRPWVSFNQNLEYQIGYICSGVFGDNPRPNDGAGSCGPVSSNGAYGVKGFSFKYGKGVWIGRTKSTSSRSGFEMIWDPNGWTETDSSFSVKQDIVAITDWSGYSGSFVQHPELTGLDCMRPCFWVELIRGRPKENTIWTSGSSISFCGVNSDTVGWSWPDGAELPFTIDK.

At Met-1–Lys-6 the chain is on the intravirion side. Residues Ile-7–Gly-27 form a helical membrane-spanning segment. The segment at Gly-11 to Trp-33 is involved in apical transport and lipid raft association. Residues Asn-28 to Lys-469 are Virion surface-facing. The segment at His-36–Ser-90 is hypervariable stalk region. N-linked (GlcNAc...) asparagine; by host glycans are attached at residues Asn-50, Asn-58, Asn-63, Asn-68, and Asn-88. The segment at Leu-91–Lys-469 is head of neuraminidase. Disulfide bonds link Cys-92-Cys-417, Cys-124-Cys-129, Cys-184-Cys-231, Cys-233-Cys-238, Cys-279-Cys-292, Cys-281-Cys-290, Cys-318-Cys-335, and Cys-421-Cys-446. Arg-118 provides a ligand contact to substrate. Asn-146 carries an N-linked (GlcNAc...) asparagine; by host glycan. The active-site Proton donor/acceptor is Asp-151. Substrate is bound at residue Arg-152. Asn-235 carries N-linked (GlcNAc...) asparagine; by host glycosylation. Residue Glu-277 to Glu-278 participates in substrate binding. Arg-293 contacts substrate. 3 residues coordinate Ca(2+): Asp-294, Gly-298, and Asp-324. Residue Arg-368 participates in substrate binding. Tyr-402 (nucleophile) is an active-site residue.

It belongs to the glycosyl hydrolase 34 family. As to quaternary structure, homotetramer. Requires Ca(2+) as cofactor. In terms of processing, N-glycosylated.

Its subcellular location is the virion membrane. The protein localises to the host apical cell membrane. The catalysed reaction is Hydrolysis of alpha-(2-&gt;3)-, alpha-(2-&gt;6)-, alpha-(2-&gt;8)- glycosidic linkages of terminal sialic acid residues in oligosaccharides, glycoproteins, glycolipids, colominic acid and synthetic substrates.. Inhibited by the neuraminidase inhibitors zanamivir (Relenza) and oseltamivir (Tamiflu). These drugs interfere with the release of progeny virus from infected cells and are effective against all influenza strains. Resistance to neuraminidase inhibitors is quite rare. Its function is as follows. Catalyzes the removal of terminal sialic acid residues from viral and cellular glycoconjugates. Cleaves off the terminal sialic acids on the glycosylated HA during virus budding to facilitate virus release. Additionally helps virus spread through the circulation by further removing sialic acids from the cell surface. These cleavages prevent self-aggregation and ensure the efficient spread of the progeny virus from cell to cell. Otherwise, infection would be limited to one round of replication. Described as a receptor-destroying enzyme because it cleaves a terminal sialic acid from the cellular receptors. May facilitate viral invasion of the upper airways by cleaving the sialic acid moieties on the mucin of the airway epithelial cells. Likely to plays a role in the budding process through its association with lipid rafts during intracellular transport. May additionally display a raft-association independent effect on budding. Plays a role in the determination of host range restriction on replication and virulence. Sialidase activity in late endosome/lysosome traffic seems to enhance virus replication. The sequence is that of Neuraminidase from Influenza A virus (strain A/Chicken/Scotland/1959 H5N1).